Here is a 148-residue protein sequence, read N- to C-terminus: Snaclec stejaggregin-A subunit beta-3 (148 aa).

Positions 1-23 (MGRFISVSFGLLVVFLSLSGAGA) are cleaved as a signal peptide. Cysteine 27 and cysteine 38 are joined by a disulfide. The C-type lectin domain maps to 34-145 (YDLYCYKVFK…CSRTHYVVCK (112 aa)). N-linked (GlcNAc...) asparagine glycans are attached at residues asparagine 47 and asparagine 78. Disulfide bonds link cysteine 55–cysteine 144 and cysteine 121–cysteine 136.

This sequence belongs to the snaclec family. Heteromultimer; disulfide-linked. In terms of tissue distribution, expressed by the venom gland.

The protein resides in the secreted. Functionally, interferes with one step of hemostasis (modulation of platelet aggregation, or coagulation cascade, for example). The sequence is that of Snaclec stejaggregin-A subunit beta-3 from Trimeresurus stejnegeri (Chinese green tree viper).